A 304-amino-acid chain; its full sequence is MKEEETTYHVPVLLKESVDAMNISPDGTYVDVTFGGGGHSREILSRLGDGGRLLGFDQDEDAERNIVNDPHFTFVRSNFRYLHNFLRYHDIGEVDAILADLGVSSHHFDDSERGFSFRFDGKLDMRMNKRAGITAADVVNTYEEERLADIFYLYGELKNSRKLASVIVKARTGQKIETIGEFLEIIKPLFGREREKKELAKIFQALRIEVNQEMEALKEMLMAATEALKPGGRLVVITYHSLEDRMVKNIMKTGNVEGKTTQDFFGNLQTPFRLVNNKVIVPDEDEITRNPRSRSAKLRIAEKK.

Residues 37–39 (GGH), Asp57, Phe79, Asp100, and His107 contribute to the S-adenosyl-L-methionine site.

It belongs to the methyltransferase superfamily. RsmH family.

It is found in the cytoplasm. The catalysed reaction is cytidine(1402) in 16S rRNA + S-adenosyl-L-methionine = N(4)-methylcytidine(1402) in 16S rRNA + S-adenosyl-L-homocysteine + H(+). Functionally, specifically methylates the N4 position of cytidine in position 1402 (C1402) of 16S rRNA. This Bacteroides fragilis (strain ATCC 25285 / DSM 2151 / CCUG 4856 / JCM 11019 / LMG 10263 / NCTC 9343 / Onslow / VPI 2553 / EN-2) protein is Ribosomal RNA small subunit methyltransferase H.